A 260-amino-acid polypeptide reads, in one-letter code: Small ribosomal subunit protein uS2 (260 aa).

Residues 224–260 (GRQGQDAGEDSAEKTFADTADGEGDFEESSNNENQEA) are disordered. Residues 243–260 (ADGEGDFEESSNNENQEA) show a composition bias toward acidic residues.

This sequence belongs to the universal ribosomal protein uS2 family.

The polypeptide is Small ribosomal subunit protein uS2 (Oenococcus oeni (strain ATCC BAA-331 / PSU-1)).